Here is a 180-residue protein sequence, read N- to C-terminus: ATP synthase subunit delta (180 aa).

The protein belongs to the ATPase delta chain family. In terms of assembly, F-type ATPases have 2 components, F(1) - the catalytic core - and F(0) - the membrane proton channel. F(1) has five subunits: alpha(3), beta(3), gamma(1), delta(1), epsilon(1). F(0) has three main subunits: a(1), b(2) and c(10-14). The alpha and beta chains form an alternating ring which encloses part of the gamma chain. F(1) is attached to F(0) by a central stalk formed by the gamma and epsilon chains, while a peripheral stalk is formed by the delta and b chains.

Its subcellular location is the cell membrane. F(1)F(0) ATP synthase produces ATP from ADP in the presence of a proton or sodium gradient. F-type ATPases consist of two structural domains, F(1) containing the extramembraneous catalytic core and F(0) containing the membrane proton channel, linked together by a central stalk and a peripheral stalk. During catalysis, ATP synthesis in the catalytic domain of F(1) is coupled via a rotary mechanism of the central stalk subunits to proton translocation. Functionally, this protein is part of the stalk that links CF(0) to CF(1). It either transmits conformational changes from CF(0) to CF(1) or is implicated in proton conduction. In Mycoplasma mobile (strain ATCC 43663 / 163K / NCTC 11711) (Mesomycoplasma mobile), this protein is ATP synthase subunit delta.